Consider the following 459-residue polypeptide: Putrescine aminotransferase (459 aa).

Pyridoxal 5'-phosphate-binding positions include Gly-150 to Thr-151 and Gln-274. Lys-300 carries the post-translational modification N6-(pyridoxal phosphate)lysine. Thr-332 is a binding site for pyridoxal 5'-phosphate.

The protein belongs to the class-III pyridoxal-phosphate-dependent aminotransferase family. Putrescine aminotransferase subfamily. Requires pyridoxal 5'-phosphate as cofactor.

The enzyme catalyses an alkane-alpha,omega-diamine + 2-oxoglutarate = an omega-aminoaldehyde + L-glutamate. It carries out the reaction putrescine + 2-oxoglutarate = 1-pyrroline + L-glutamate + H2O. It catalyses the reaction cadaverine + 2-oxoglutarate = 5-aminopentanal + L-glutamate. Its pathway is amine and polyamine degradation; putrescine degradation; 4-aminobutanal from putrescine (transaminase route): step 1/1. Functionally, catalyzes the aminotransferase reaction from putrescine to 2-oxoglutarate, leading to glutamate and 4-aminobutanal, which spontaneously cyclizes to form 1-pyrroline. This is the first step in one of two pathways for putrescine degradation, where putrescine is converted into 4-aminobutanoate (gamma-aminobutyrate or GABA) via 4-aminobutanal. Also functions as a cadaverine transaminase in a a L-lysine degradation pathway to succinate that proceeds via cadaverine, glutarate and L-2-hydroxyglutarate. In Escherichia coli O81 (strain ED1a), this protein is Putrescine aminotransferase.